Reading from the N-terminus, the 132-residue chain is UPF0329 protein ECU07_0050/ECU09_2020 (132 aa).

Belongs to the UPF0329 family.

In Encephalitozoon cuniculi (strain GB-M1) (Microsporidian parasite), this protein is UPF0329 protein ECU07_0050/ECU09_2020.